The chain runs to 410 residues: Testis-specific Y-encoded-like protein 6 (410 aa).

Disordered regions lie at residues 1–31 (MSLP…EKSK) and 46–69 (PIVF…DGGH). Ser-9 carries the post-translational modification Phosphoserine. A compositionally biased stretch (basic and acidic residues) spans 18–31 (EDPHQGQRSREKSK).

Belongs to the nucleosome assembly protein (NAP) family.

This chain is Testis-specific Y-encoded-like protein 6 (TSPYL6), found in Homo sapiens (Human).